We begin with the raw amino-acid sequence, 1333 residues long: Inner capsid protein VP1 (1333 aa).

A compositionally biased stretch (polar residues) spans 1-10; that stretch reads MHSTTNNSNK. The tract at residues 1–93 is disordered; that stretch reads MHSTTNNSNK…MDMEKAAETT (93 aa). The segment covering 11–20 has biased composition (basic and acidic residues); the sequence is RNNEEKHKQP. Positions 64 to 82 are enriched in polar residues; that stretch reads DGASRSGTNAKVATASSAR.

It belongs to the turreted BTV-fold inner capsid family. In terms of assembly, homodecamer; each decamer is made up of two conformers of VP2, called VP2A and VP2B. 12 homodecamers assemble to form an icosahedral capsid.

Its subcellular location is the virion. Inner capsid protein that self-assembles to form an icosahedral capsid with a T=2 symmetry, which consists of 120 copies of VP2, with channels at each of its five-fold vertices. This capsid constitutes the innermost concentric layer of the viral mature particle. The protein is Inner capsid protein VP1 (S1) of Lymantria dispar cypovirus 1 (isolate Rao) (LdCPV-1).